The following is a 179-amino-acid chain: Cytochrome b6-f complex iron-sulfur subunit 1 (179 aa).

A helical transmembrane segment spans residues L21–I43. In terms of domain architecture, Rieske spans G61–L162. [2Fe-2S] cluster contacts are provided by C108, H110, C126, and H129. C113 and C128 are disulfide-bonded.

Belongs to the Rieske iron-sulfur protein family. As to quaternary structure, the 4 large subunits of the cytochrome b6-f complex are cytochrome b6, subunit IV (17 kDa polypeptide, PetD), cytochrome f and the Rieske protein, while the 4 small subunits are PetG, PetL, PetM and PetN. The complex functions as a dimer. It depends on [2Fe-2S] cluster as a cofactor.

The protein resides in the cellular thylakoid membrane. The catalysed reaction is 2 oxidized [plastocyanin] + a plastoquinol + 2 H(+)(in) = 2 reduced [plastocyanin] + a plastoquinone + 4 H(+)(out). Its function is as follows. Component of the cytochrome b6-f complex, which mediates electron transfer between photosystem II (PSII) and photosystem I (PSI), cyclic electron flow around PSI, and state transitions. This chain is Cytochrome b6-f complex iron-sulfur subunit 1, found in Trichormus variabilis (strain ATCC 29413 / PCC 7937) (Anabaena variabilis).